A 294-amino-acid chain; its full sequence is Acetylglutamate kinase (294 aa).

Substrate-binding positions include G66–G67, R88, and N193.

It belongs to the acetylglutamate kinase family. ArgB subfamily.

It localises to the cytoplasm. It carries out the reaction N-acetyl-L-glutamate + ATP = N-acetyl-L-glutamyl 5-phosphate + ADP. Its pathway is amino-acid biosynthesis; L-arginine biosynthesis; N(2)-acetyl-L-ornithine from L-glutamate: step 2/4. In terms of biological role, catalyzes the ATP-dependent phosphorylation of N-acetyl-L-glutamate. This is Acetylglutamate kinase from Agrobacterium fabrum (strain C58 / ATCC 33970) (Agrobacterium tumefaciens (strain C58)).